The primary structure comprises 711 residues: 1,4-alpha-glucan-branching enzyme (711 aa).

Positions 98 and 135 each coordinate (1,4-alpha-D-glucosyl)n. The active-site Nucleophile is the D353. E414 (proton donor) is an active-site residue.

Belongs to the glycosyl hydrolase 13 family. GlgB subfamily.

It is found in the cytoplasm. It carries out the reaction Transfers a segment of a (1-&gt;4)-alpha-D-glucan chain to a primary hydroxy group in a similar glucan chain.. It functions in the pathway glycan biosynthesis; glycogen biosynthesis. Its function is as follows. Glycogen-branching enzyme participates in the glycogen biosynthetic process along with glycogenin and glycogen synthase. Generates alpha-1,6-glucosidic branches from alpha-1,4-linked glucose chains, to increase solubility of the glycogen polymer. In Debaryomyces hansenii (strain ATCC 36239 / CBS 767 / BCRC 21394 / JCM 1990 / NBRC 0083 / IGC 2968) (Yeast), this protein is 1,4-alpha-glucan-branching enzyme (GLC3).